An 813-amino-acid polypeptide reads, in one-letter code: Polycomb group protein FERTILIZATION-INDEPENDENT SEED 2 (813 aa).

The tract at residues 1-27 is disordered; the sequence is MARKSIRGKEVVMVSDDDDDDDDVDDD. Over residues 15–26 the composition is skewed to acidic residues; the sequence is SDDDDDDDDVDD. The C2H2-type zinc-finger motif lies at 134–155; that stretch reads CPFCLIPCGGHEGLQLHLKSSH. Disordered stretches follow at residues 197 to 216, 232 to 261, and 274 to 648; these read SPLTFCSKNRNQRRQRDDSN, DLPRGTENDSTHVNDDNVSSPPRAHSSEKI, and ESSE…RKEL. Residues 232 to 246 show a composition bias toward basic and acidic residues; it reads DLPRGTENDSTHVND. Residues 243 to 264 form an A-1 repeat; sequence HVNDDNVSSPPRAHSSEKISDI. Positions 243–542 are 12 X approximate repeat A; that stretch reads HVNDDNVSSP…HSSKKNKSTR (300 aa). One copy of the B-1 repeat lies at 265 to 281; sequence LTTTQLAIAESSEPKVP. The interval 265 to 640 is 7 X approximate repeat B; the sequence is LTTTQLAIAE…KAEPSEPKVT (376 aa). The A-2 repeat unit spans residues 282 to 304; sequence HVNDGNVSSPPRAHSSAEKNEST. 3 stretches are compositionally biased toward basic and acidic residues: residues 296-307, 319-331, and 344-353; these read SSAEKNESTHVN, HSLEKNESTHVNE, and KKNESTHMND. The stretch at 305–327 is one A-3 repeat; the sequence is HVNDDDDVSSPPRAHSLEKNEST. One copy of the A-4 repeat lies at 328–349; sequence HVNEDNISSPPKAHSSKKNEST. An A-5 repeat occupies 350–371; that stretch reads HMNDEDVSFPPRTRSSKETSDI. A B-2 repeat occupies 372-388; the sequence is LTTTQPAIVEPSEPKVR. The span at 388–402 shows a compositional bias: basic residues; the sequence is RRGSRRKQLYAKRYK. One copy of the B-3 repeat lies at 403-419; sequence ARETQPAIAESSEPKVL. Composition is skewed to basic and acidic residues over residues 414–423 and 453–462; these read SEPKVLHVND and SEPKVPHVND. Residues 420–441 form an A-6 repeat; the sequence is HVNDENVSSPPEAHSLEKASDI. The B-4 repeat unit spans residues 442–458; the sequence is LTTTQPAIAESSEPKVP. One copy of the A-7 repeat lies at 459–481; it reads HVNDENVSSTPRAHSSKKNKSTR. The segment covering 472 to 481 has biased composition (basic residues); sequence HSSKKNKSTR. The A-8 repeat unit spans residues 482–502; it reads KNVDNVPSPPKTRSSKKTSDI. The span at 501–512 shows a compositional bias: polar residues; sequence DILTTTQPTIAE. The B-5 repeat unit spans residues 503 to 519; that stretch reads LTTTQPTIAESSEPKVR. A compositionally biased stretch (basic and acidic residues) spans 514–523; the sequence is SEPKVRHVND. The stretch at 520-542 is one A-9 repeat; it reads HVNDDNVSSTPRAHSSKKNKSTR. Residues 543 to 563 form an A-10 repeat; it reads KNDDNIPSPPKTRSSKKTSNI. Residues 564 to 579 form a B-6 repeat; sequence LTRTQPAIAESEPKVP. Residues 574-586 are compositionally biased toward basic and acidic residues; sequence SEPKVPHVNDDKV. An A-11 repeat occupies 580-601; the sequence is HVNDDKVSSTPRAHSSKKNKST. The span at 593-602 shows a compositional bias: basic residues; the sequence is HSSKKNKSTH. An A-12 repeat occupies 602–623; sequence HKKDDNASLPPKTRSSKKTSDI. A B-7 repeat occupies 624 to 640; it reads LATTQPAKAEPSEPKVT. Residues 648 to 783 are VEFS-box; it reads LHAERCEAKR…CAKTFHKCTT (136 aa).

Belongs to the VEFS (VRN2-EMF2-FIS2-SU(Z)12) family. Probably indirectly associated with FIE and/or MEA. In plants, PcG complexes are probably composed of a member of the EZ family (CLF or MEA), FIE, and a member of the VEFS family (FIS2, VRN2 or EMF2). As to expression, weakly expressed. Expressed in late siliques.

The protein resides in the nucleus. Functionally, polycomb group (PcG) protein. PcG proteins act by forming multiprotein complexes, which are required to maintain the transcriptionally repressive state of homeotic genes throughout development. PcG proteins are not required to initiate repression, but to maintain it during later stages of development. They probably act via the methylation of histones, rendering chromatin heritably changed in its expressibility. Required to prevent the proliferation of the central cell by repressing unknown target genes before fertilization. Regulates the anteroposterior organization of the endosperm. This Arabidopsis thaliana (Mouse-ear cress) protein is Polycomb group protein FERTILIZATION-INDEPENDENT SEED 2.